The sequence spans 315 residues: MSQSLRIIFAGTPDFAARHLDALLSSEHQVVGVFTQPDRPAGRGKKLMPSPVKVLAEAHNLPVFQPSSLRPQDNQRLVADLGADIMVVVAYGLILPKAVLEMPRLGCINVHGSLLPRWRGAAPIQRSLWAGDSETGVTIMQMDVGLDTGDMLYKLSCPITAEDTSGSLYDKLAELGPQGLLATLAQLANGTARPEVQDESLVCHAEKLSKEEARIDWSLSAAQLERCIRAFNPWPMSWLEIDGQPVKVWRASVIAEAAHAEPGTIVAATKQGIQVATGDGILSLESLQPAGKKAMSAQDLLNSRREWFIPGTRLA.

A (6S)-5,6,7,8-tetrahydrofolate-binding site is contributed by 113–116; that stretch reads SLLP.

It belongs to the Fmt family.

The enzyme catalyses L-methionyl-tRNA(fMet) + (6R)-10-formyltetrahydrofolate = N-formyl-L-methionyl-tRNA(fMet) + (6S)-5,6,7,8-tetrahydrofolate + H(+). Its function is as follows. Attaches a formyl group to the free amino group of methionyl-tRNA(fMet). The formyl group appears to play a dual role in the initiator identity of N-formylmethionyl-tRNA by promoting its recognition by IF2 and preventing the misappropriation of this tRNA by the elongation apparatus. The chain is Methionyl-tRNA formyltransferase from Klebsiella pneumoniae subsp. pneumoniae (strain ATCC 700721 / MGH 78578).